Here is a 460-residue protein sequence, read N- to C-terminus: RING finger protein DG17 (460 aa).

The segment at 27 to 67 (CPICFEFIYKKQIYQCKSGHHACKECWEKSLETKKECMTCK) adopts an RING-type zinc-finger fold. TRAF-type zinc fingers lie at residues 141 to 194 (SHLI…KKEL) and 196 to 253 (THYK…SELQ). A coiled-coil region spans residues 269–294 (IEKLTNQVGQSKKTHDELLKKIEDLS). In terms of domain architecture, MATH spans 320–448 (GYRNKWIISN…DDKLIIEIYI (129 aa)).

It belongs to the TNF receptor-associated factor family. A subfamily.

The protein resides in the cytoplasm. In terms of biological role, probable adapter protein and signal transducer that links members of the tumor necrosis factor receptor family to different signaling pathways by association with the receptor cytoplasmic domain and kinases. The protein is RING finger protein DG17 (zfaA) of Dictyostelium discoideum (Social amoeba).